Reading from the N-terminus, the 77-residue chain is Conotoxin Bt6.6 (77 aa).

Residues 1–19 form the signal peptide; the sequence is MEKLTILLLVAAVLMSTQA. Positions 20–38 are excised as a propeptide; sequence LIQSDGEKRQQAKINFLSX. 3 disulfide bridges follow: Cys-51–Cys-65, Cys-58–Cys-69, and Cys-64–Cys-74.

This sequence belongs to the conotoxin O2 superfamily. Expressed by the venom duct.

It is found in the secreted. The protein is Conotoxin Bt6.6 of Conus betulinus (Beech cone).